Reading from the N-terminus, the 549-residue chain is MLNQKLNPTPSEDLTIDVDLFYETDPCELKLDEMIEAEPEPEMIEGLPASDALTPADRYLELFEHVQSTKLFPDSKTFPDCAPKMDPLDILIRYRKVRRHRDFDLRRFVENHFWLPETLSSEYVSNPENSLKEHIDQLWPILTREPQDHIPWSSLLALPQSYIVPGGRFSETYYWDSYFTMLGLAESGREDLLKCMADNFAWMIENYGHIPNGNRTYYLSRSQPPVFALMVELFEEDGVRGARRYLDHLKMEYAFWMDGAESLALNQAYRHVVRMPDGSLLNRYWDDRDTPRDESWLEDVETAKHSGRPPNEVYRDLRAGAASGWDYSSRWLRDAGRLASIRTTQFIPIDLNAFLYKLESAIANISALKGERDTEALFRQKASDRRAAVNHYLWDDENGCYRDYDWRREEMALFSAASIVPLYVGMANHEQADRLANVVRSRLLTPGGIMATEYETGEQWDKPNGWAPLQWMAIQGFKRYGDDMLGDEIAHNWLKTVNHFYQEHHKLIEKYHISGGTPREGGGGEYPLQDGFGWTNGVVRRLIGLYGEP.

Residues Arg168, 175-176 (WD), Asn212, 221-223 (RSQ), 292-294 (RDE), and Gly324 contribute to the substrate site. Active-site proton donor/acceptor residues include Asp326 and Glu509. Residue Glu525 participates in substrate binding.

It belongs to the glycosyl hydrolase 37 family. As to quaternary structure, monomer.

It is found in the cytoplasm. The catalysed reaction is alpha,alpha-trehalose + H2O = alpha-D-glucose + beta-D-glucose. The protein operates within glycan degradation; trehalose degradation; D-glucose from alpha,alpha-trehalose: step 1/1. Functionally, hydrolyzes trehalose to glucose. Could be involved, in cells returning to low osmolarity conditions, in the utilization of the accumulated cytoplasmic trehalose, which was synthesized in response to high osmolarity. The protein is Cytoplasmic trehalase of Salmonella typhi.